A 381-amino-acid polypeptide reads, in one-letter code: Creatine kinase B-type (381 aa).

A Phosphagen kinase N-terminal domain is found at 11-98; that stretch reads KMKYSVDDEY…FDPVIEDRHG (88 aa). Val72 serves as a coordination point for creatine. The region spanning 125-367 is the Phosphagen kinase C-terminal domain; sequence YVLSSRVRTG…KLLIEMEKRL (243 aa). ATP is bound by residues 128-132, Arg130, Arg132, and His191; that span reads SSRVR. Glu232 contributes to the creatine binding site. Residue Arg236 coordinates ATP. Thr282 is modified (phosphothreonine; by autocatalysis). Creatine is bound at residue Ser285. At Ser285 the chain carries Phosphoserine; by autocatalysis. A Phosphothreonine; by autocatalysis modification is found at Thr289. ATP contacts are provided by residues Arg292, Arg320, 320-325, and Asp335; that span reads RGTGGV.

This sequence belongs to the ATP:guanido phosphotransferase family. As to quaternary structure, dimer of identical or non-identical chains, which can be either B (brain type) or M (muscle type). With MM being the major form in skeletal muscle and myocardium, MB existing in myocardium, and BB existing in many tissues, especially brain. Post-translationally, ba-CK and Bb-CK are phosphorylated. The N-terminus of BA-CK is blocked. Expressed in almost all tissues and found enriched in various region of the brain, retina, heart, gizzard, gut and sperm.

Its subcellular location is the cytoplasm. It is found in the cytosol. It localises to the mitochondrion. The protein localises to the cell membrane. It carries out the reaction creatine + ATP = N-phosphocreatine + ADP + H(+). Its function is as follows. Reversibly catalyzes the transfer of phosphate between ATP and various phosphogens (e.g. creatine phosphate). Creatine kinase isoenzymes play a central role in energy transduction in tissues with large, fluctuating energy demands, such as skeletal muscle, heart, brain and spermatozoa. The polypeptide is Creatine kinase B-type (Gallus gallus (Chicken)).